The chain runs to 315 residues: 4-hydroxy-3-methylbut-2-enyl diphosphate reductase (315 aa).

Cys12 serves as a coordination point for [4Fe-4S] cluster. (2E)-4-hydroxy-3-methylbut-2-enyl diphosphate contacts are provided by His43 and His81. Dimethylallyl diphosphate is bound by residues His43 and His81. Residues His43 and His81 each contribute to the isopentenyl diphosphate site. Cys103 is a [4Fe-4S] cluster binding site. His131 provides a ligand contact to (2E)-4-hydroxy-3-methylbut-2-enyl diphosphate. His131 is a dimethylallyl diphosphate binding site. His131 contributes to the isopentenyl diphosphate binding site. Residue Glu133 is the Proton donor of the active site. (2E)-4-hydroxy-3-methylbut-2-enyl diphosphate is bound at residue Thr170. Position 198 (Cys198) interacts with [4Fe-4S] cluster. Positions 226, 228, and 271 each coordinate (2E)-4-hydroxy-3-methylbut-2-enyl diphosphate. Dimethylallyl diphosphate-binding residues include Ser226, Asn228, and Ser271. Positions 226, 228, and 271 each coordinate isopentenyl diphosphate.

This sequence belongs to the IspH family. Requires [4Fe-4S] cluster as cofactor.

It carries out the reaction isopentenyl diphosphate + 2 oxidized [2Fe-2S]-[ferredoxin] + H2O = (2E)-4-hydroxy-3-methylbut-2-enyl diphosphate + 2 reduced [2Fe-2S]-[ferredoxin] + 2 H(+). The enzyme catalyses dimethylallyl diphosphate + 2 oxidized [2Fe-2S]-[ferredoxin] + H2O = (2E)-4-hydroxy-3-methylbut-2-enyl diphosphate + 2 reduced [2Fe-2S]-[ferredoxin] + 2 H(+). It functions in the pathway isoprenoid biosynthesis; dimethylallyl diphosphate biosynthesis; dimethylallyl diphosphate from (2E)-4-hydroxy-3-methylbutenyl diphosphate: step 1/1. It participates in isoprenoid biosynthesis; isopentenyl diphosphate biosynthesis via DXP pathway; isopentenyl diphosphate from 1-deoxy-D-xylulose 5-phosphate: step 6/6. In terms of biological role, catalyzes the conversion of 1-hydroxy-2-methyl-2-(E)-butenyl 4-diphosphate (HMBPP) into a mixture of isopentenyl diphosphate (IPP) and dimethylallyl diphosphate (DMAPP). Acts in the terminal step of the DOXP/MEP pathway for isoprenoid precursor biosynthesis. This Anoxybacillus flavithermus (strain DSM 21510 / WK1) protein is 4-hydroxy-3-methylbut-2-enyl diphosphate reductase.